A 48-amino-acid chain; its full sequence is Large ribosomal subunit protein bL33B (48 aa).

Belongs to the bacterial ribosomal protein bL33 family.

This is Large ribosomal subunit protein bL33B from Lactococcus lactis subsp. cremoris (strain MG1363).